Consider the following 126-residue polypeptide: Large ribosomal subunit protein bL12 (126 aa).

The protein belongs to the bacterial ribosomal protein bL12 family. In terms of assembly, homodimer. Part of the ribosomal stalk of the 50S ribosomal subunit. Forms a multimeric L10(L12)X complex, where L10 forms an elongated spine to which 2 to 4 L12 dimers bind in a sequential fashion. Binds GTP-bound translation factors.

Forms part of the ribosomal stalk which helps the ribosome interact with GTP-bound translation factors. Is thus essential for accurate translation. This chain is Large ribosomal subunit protein bL12, found in Coxiella burnetii (strain CbuK_Q154) (Coxiella burnetii (strain Q154)).